The chain runs to 148 residues: Deoxyuridine 5'-triphosphate nucleotidohydrolase (148 aa).

Residues 68 to 70 (RSG), N81, 85 to 87 (TID), and K95 each bind substrate.

This sequence belongs to the dUTPase family. Requires Mg(2+) as cofactor.

The enzyme catalyses dUTP + H2O = dUMP + diphosphate + H(+). The protein operates within pyrimidine metabolism; dUMP biosynthesis; dUMP from dCTP (dUTP route): step 2/2. Its function is as follows. This enzyme is involved in nucleotide metabolism: it produces dUMP, the immediate precursor of thymidine nucleotides and it decreases the intracellular concentration of dUTP so that uracil cannot be incorporated into DNA. The sequence is that of Deoxyuridine 5'-triphosphate nucleotidohydrolase from Rickettsia akari (strain Hartford).